A 158-amino-acid polypeptide reads, in one-letter code: Proteinase inhibitor type-2 (158 aa).

The N-terminal stretch at Met1 to Ala24 is a signal peptide. A run of 2 repeats spans residues Asp29 to Asn86 and Pro87 to Lys146. 8 cysteine pairs are disulfide-bonded: Cys33–Cys121, Cys37–Cys117, Cys45–Cys127, Cys57–Cys94, Cys60–Cys78, Cys61–Cys90, Cys67–Cys103, and Cys120–Cys138.

It belongs to the protease inhibitor I20 (potato type II proteinase inhibitor) family.

The sequence is that of Proteinase inhibitor type-2 from Solanum tuberosum (Potato).